Consider the following 602-residue polypeptide: Alpha-glucosides permease MPH3 (602 aa).

Over 1-106 the chain is Cytoplasmic; the sequence is MKNLSFLINR…AAAWSLLVST (106 aa). A helical membrane pass occupies residues 107–127; it reads TLIMEGYDTAILGAFYALPIF. The Extracellular portion of the chain corresponds to 128–142; the sequence is QRKFGSQNDKTGEWE. A helical transmembrane segment spans residues 143–163; the sequence is ISASWQIGLTLCYMAGEIVGL. The Cytoplasmic portion of the chain corresponds to 164-178; that stretch reads QLTGPSVDLVGNRYT. A helical transmembrane segment spans residues 179–199; the sequence is LIIALFFLAAFTFILYFCNSL. Residue Gly-200 is a topological domain, extracellular. The chain crosses the membrane as a helical span at residues 201–221; it reads MIAVGQALCGMPWGCFQCLTV. Residues 222–234 are Cytoplasmic-facing; sequence SYASEICPLALRY. The chain crosses the membrane as a helical span at residues 235 to 255; it reads YLTTYSNLCWLFGQLFAAGIM. Topologically, residues 256-270 are extracellular; sequence KNSQKKYADSELGYK. A helical membrane pass occupies residues 271 to 291; that stretch reads LPFALQWILPVPLALGIFFAP. Over 292 to 363 the chain is Cytoplasmic; the sequence is ESPWWLVKKG…EDKINRRRTR (72 aa). Residues 364–384 form a helical membrane-spanning segment; the sequence is ITCLCWAGQATCGSILIGYST. Over 385 to 397 the chain is Extracellular; it reads YFYEKAGVSTEMS. The helical transmembrane segment at 398–418 threads the bilayer; it reads FTFSIIQYCLGICATFLSWWA. The Cytoplasmic segment spans residues 419–426; the sequence is SKYFGRYD. A helical transmembrane segment spans residues 427 to 447; that stretch reads LYAFGLAFQTIVFFIIGGLGC. Residues 448 to 459 lie on the Extracellular side of the membrane; the sequence is SSTHGSKMGSGS. A helical membrane pass occupies residues 460 to 480; that stretch reads LLMAVAFFYNLGIAPVVFCLV. At 481 to 492 the chain is on the cytoplasmic side; sequence SEMPSSRLRTKT. The chain crosses the membrane as a helical span at residues 493-513; that stretch reads IILARNTYNVVSIICSVLILY. Residues 514-525 are Extracellular-facing; that stretch reads QLNSKKWNWGAK. The helical transmembrane segment at 526–546 threads the bilayer; that stretch reads SGFFWGVLCFCTLIWAVVDLP. The Cytoplasmic portion of the chain corresponds to 547–602; the sequence is ETAGKTFVEINELFKLGVSARKFKSTKVDPFVVKTPPKDVSHNDPKGDIEASIAEE. Positions 582-595 are enriched in basic and acidic residues; sequence PPKDVSHNDPKGDI. The segment at 582–602 is disordered; that stretch reads PPKDVSHNDPKGDIEASIAEE.

This sequence belongs to the major facilitator superfamily. Sugar transporter (TC 2.A.1.1) family.

It localises to the cell membrane. Functionally, high-affinity uptake of maltose and maltotriose. Also transports alpha-methylglucoside, glucose and turanose but not melezitose or trehalose. This chain is Alpha-glucosides permease MPH3 (MPH3), found in Saccharomyces cerevisiae (strain ATCC 204508 / S288c) (Baker's yeast).